The chain runs to 261 residues: MSLKKSPFFELRSGSVDTLLFTVKTTDLDALRAELVKRFEATPEFFADDVVAIDVRRLADGERVALADIRQMLNDVRMRPVGVVALATQGWAGEAGLPLLEARDRRAPAAKPADEAEPAAVPAVETAAAPAAAAAPEQSSDPAPTLVQAGGQTLVIDRPLRSGQQIYAKGDLVVLAPVSHGAEIIAEGNIHIYAPLRGRALAGVHGNHDARIFCTCLEPELISIAGIYRTTENPLPADVLGKSVQIRLEEEKLMIEPLRLT.

The disordered stretch occupies residues 106-144 (RAPAAKPADEAEPAAVPAVETAAAPAAAAAPEQSSDPAP). Residues 118–144 (PAAVPAVETAAAPAAAAAPEQSSDPAP) show a composition bias toward low complexity.

This sequence belongs to the MinC family. As to quaternary structure, interacts with MinD and FtsZ.

Cell division inhibitor that blocks the formation of polar Z ring septums. Rapidly oscillates between the poles of the cell to destabilize FtsZ filaments that have formed before they mature into polar Z rings. Prevents FtsZ polymerization. The sequence is that of Probable septum site-determining protein MinC from Burkholderia orbicola (strain MC0-3).